Consider the following 89-residue polypeptide: Small ribosomal subunit protein uS15 (89 aa).

It belongs to the universal ribosomal protein uS15 family. In terms of assembly, part of the 30S ribosomal subunit. Forms a bridge to the 50S subunit in the 70S ribosome, contacting the 23S rRNA.

In terms of biological role, one of the primary rRNA binding proteins, it binds directly to 16S rRNA where it helps nucleate assembly of the platform of the 30S subunit by binding and bridging several RNA helices of the 16S rRNA. Forms an intersubunit bridge (bridge B4) with the 23S rRNA of the 50S subunit in the ribosome. In Leuconostoc citreum (strain KM20), this protein is Small ribosomal subunit protein uS15.